We begin with the raw amino-acid sequence, 282 residues long: N-acetylaspartate synthetase (282 aa).

Residues 103–125 traverse the membrane as a helical segment; the sequence is FLTVMCYVMTKSFTLTFCAPFIL. The N-acetyltransferase domain maps to 110–269; that stretch reads VMTKSFTLTF…RSPLERLFFQ (160 aa).

It belongs to the NAT8 family.

Its subcellular location is the cytoplasm. It is found in the microsome membrane. It localises to the mitochondrion membrane. The protein localises to the endoplasmic reticulum membrane. The enzyme catalyses L-aspartate + acetyl-CoA = N-acetyl-L-aspartate + CoA + H(+). Its function is as follows. Catalyzes the synthesis of N-acetylaspartate acid (NAA) from L-aspartate and acetyl-CoA. The sequence is that of N-acetylaspartate synthetase (nat8l) from Danio rerio (Zebrafish).